Here is a 275-residue protein sequence, read N- to C-terminus: MAIVKVKPTSPGRRAMVKVVNKNLHQGKPFAALLDSQSSTAGRNNNGRITTRHKGGGHKQHYRIVDFRRTKDGIPAKVERLEYDPNRSANIALVLYADGERRYIIAPKGLTVGQQLMSGSEAPIRAGNTLPIRNIPVGTTIHCIEMLPGKGAQMARSAGTSAMLLAREGVYAQVRLRSGEIRRVHIECRATVGEVGNEEHSLRQIGKAGANRWRGIRPTVRGVAMNPVDHPHGGGEGKTAAGRDPVSPWGTPAKGYRTRSNKRTTTMIVQRRHKR.

The segment covering 35–49 (DSQSSTAGRNNNGRI) has biased composition (polar residues). 2 disordered regions span residues 35 to 59 (DSQSSTAGRNNNGRITTRHKGGGHK) and 224 to 275 (AMNP…RHKR). Residues 50–59 (TTRHKGGGHK) are compositionally biased toward basic residues.

Belongs to the universal ribosomal protein uL2 family. As to quaternary structure, part of the 50S ribosomal subunit. Forms a bridge to the 30S subunit in the 70S ribosome.

In terms of biological role, one of the primary rRNA binding proteins. Required for association of the 30S and 50S subunits to form the 70S ribosome, for tRNA binding and peptide bond formation. It has been suggested to have peptidyltransferase activity; this is somewhat controversial. Makes several contacts with the 16S rRNA in the 70S ribosome. This Burkholderia cenocepacia (strain HI2424) protein is Large ribosomal subunit protein uL2.